Consider the following 825-residue polypeptide: Heterogeneous nuclear ribonucleoprotein U (825 aa).

Serine 2 is modified (N-acetylserine; partial). Phosphoserine is present on serine 4. The SAP domain maps to 8–42; it reads VKKLKVSELKEELKKRRLSDKGLKAELMERLQAAL. 2 positions are modified to N6-acetyllysine: lysine 17 and lysine 21. Residues 41–281 are disordered; sequence ALDDEEAGGR…PQPPVEEEDE (241 aa). Serine 59 carries the post-translational modification Phosphoserine; by PLK1. Residue serine 66 is modified to Phosphoserine. The segment covering 72 to 81 has biased composition (low complexity); sequence AGLEQEAAAG. Acidic residues-rich tracts occupy residues 82–95, 120–134, and 140–153; these read GDEE…EEEG, PMEE…ENGD, and EGED…EGAG. Residues 159 to 178 are compositionally biased toward low complexity; sequence GEQQPQPPATQQQQPQQQRG. The residue at position 186 (lysine 186) is an N6-acetyllysine. Serine 187 carries the ADP-ribosylserine modification. A compositionally biased stretch (low complexity) spans 199-211; it reads APPGARQGQQQAG. Lysine 215 is modified (N6-acetyllysine). The span at 233 to 266 shows a compositional bias: basic and acidic residues; the sequence is GKTEQKGGDKKRGVKRPREDHGRGYFEYIEENKY. Position 255 is a citrulline (arginine 255). Lysine 265 is modified (N6-acetyllysine; alternate). Lysine 265 is covalently cross-linked (Glycyl lysine isopeptide (Lys-Gly) (interchain with G-Cter in SUMO1); alternate). Residue lysine 265 forms a Glycyl lysine isopeptide (Lys-Gly) (interchain with G-Cter in SUMO2); alternate linkage. Position 266 is a phosphotyrosine (tyrosine 266). Residues serine 267 and serine 271 each carry the phosphoserine modification. The 198-residue stretch at 267–464 folds into the B30.2/SPRY domain; it reads SRAKSPQPPV…VEFNFGQKEK (198 aa). The residue at position 286 (threonine 286) is a Phosphothreonine. Position 352 is an N6-acetyllysine (lysine 352). Residues 488–672 form an ATPase domain region; the sequence is PKGPEEKKDC…QKLLEQYKEE (185 aa). Lysine 495 is covalently cross-linked (Glycyl lysine isopeptide (Lys-Gly) (interchain with G-Cter in SUMO2)). 504–511 serves as a coordination point for ATP; the sequence is GLPGAGKT. Lysine 516 and lysine 524 each carry N6-acetyllysine; alternate. Glycyl lysine isopeptide (Lys-Gly) (interchain with G-Cter in SUMO2); alternate cross-links involve residues lysine 516 and lysine 524. Position 532 is a phosphothreonine (threonine 532). Residue lysine 536 forms a Glycyl lysine isopeptide (Lys-Gly) (interchain with G-Cter in SUMO2) linkage. Lysine 551 bears the N6-acetyllysine mark. Position 565 is an N6-acetyllysine; alternate (lysine 565). A Glycyl lysine isopeptide (Lys-Gly) (interchain with G-Cter in SUMO2); alternate cross-link involves residue lysine 565. Lysine 574 participates in a covalent cross-link: Glycyl lysine isopeptide (Lys-Gly) (interchain with G-Cter in SUMO2). Threonine 582 is subject to Phosphothreonine. Residues lysine 609 and lysine 626 each participate in a glycyl lysine isopeptide (Lys-Gly) (interchain with G-Cter in SUMO2) cross-link. The tract at residues 611–626 is actin-binding; that stretch reads EDYKQRTQKKAEVEGK. Lysine 635 is subject to N6-acetyllysine; alternate. Lysine 635 participates in a covalent cross-link: Glycyl lysine isopeptide (Lys-Gly) (interchain with G-Cter in SUMO2); alternate. Glycyl lysine isopeptide (Lys-Gly) (interchain with G-Cter in SUMO2) cross-links involve residues lysine 664 and lysine 670. The span at 671 to 683 shows a compositional bias: basic and acidic residues; that stretch reads EESKKALPPEKKQ. Residues 671 to 749 are disordered; it reads EESKKALPPE…GGGGGGSGGI (79 aa). Arginine 702 is subject to Omega-N-methylarginine. A compositionally biased stretch (gly residues) spans 710-728; the sequence is GGFNMRGGNFRGGAPGNRG. Residues 714–739 are RNA-binding RGG-box; the sequence is MRGGNFRGGAPGNRGGYNRRGNMPQR. Asymmetric dimethylarginine occurs at positions 715, 720, and 727. Residues arginine 733 and arginine 739 each carry the asymmetric dimethylarginine; alternate modification. Omega-N-methylarginine; alternate is present on residues arginine 733 and arginine 739. Arginine 739 is modified (dimethylated arginine; in A2780 ovarian carcinoma cell line). Positions 739–749 are enriched in gly residues; sequence RGGGGGGSGGI. Asymmetric dimethylarginine is present on residues arginine 755 and arginine 762. Residues 769 to 799 form a disordered region; that stretch reads GNYNRGGMPNRGNYNQNFRGRGNNRGYKNQS. The segment covering 778–799 has biased composition (low complexity); it reads NRGNYNQNFRGRGNNRGYKNQS. Lysine 814 carries the post-translational modification N6-acetyllysine; alternate. Residue lysine 814 forms a Glycyl lysine isopeptide (Lys-Gly) (interchain with G-Cter in SUMO2); alternate linkage.

In terms of assembly, oligomer (via ATPase domain and RNA-binding RGG-box region); oligomerization occurs upon ATP-binding in a chromatin-associated RNAs (caRNAs)- and transcription-dependent manner and is required for chromatin decompaction. ATP hydrolysis is required to cycle from an oligomeric to monomeric state to compact chromatin. Component of the coding region determinant (CRD)-mediated complex, composed of DHX9, HNRNPU, IGF2BP1, SYNCRIP and YBX1. Identified in the spliceosome C complex. Identified in a IGF2BP1-dependent mRNP granule complex containing untranslated mRNAs. Associates with heterogeneous nuclear ribonucleoprotein (hnRNP) particles. Associates (via middle region) with the C-terminal domain (CTD) RNA polymerase II (Pol II) holoenzyme; this association occurs in a RNA-independent manner. Associates (via middle region) with the core-TFIIH basal transcription factor complex; this association inhibits the CTD phosphorylation of RNA polymerase II holoenzyme by down-regulating TFIIH kinase activity. Associates with the telomerase holoenzyme complex. Associates with spindle microtubules (MTs) in a TPX2-dependent manner. Interacts (via C-terminus) with actin; this interaction is direct and mediates association with the phosphorylated CTD of RNA polymerase II and is disrupted in presence of the long non-coding H19 RNA. Interacts with AURKA. Interacts (via C-terminus) with CBX5; this interaction is, at least in part, RNA-dependent. Interacts with CR2. Interacts with CRY1. Interacts (via C-terminus) with EP300; this interaction enhances DNA-binding to nuclear scaffold/matrix attachment region (S/MAR) elements. Interacts with ERBB4. Interacts with GEMIN5. Interacts with IGF2BP1. Interacts with IGF2BP2 and IGF2BP3. Interacts with NCL; this interaction occurs during mitosis. Interacts (via C-terminus) with NR3C1 (via C-terminus). Interacts with PLK1; this interaction induces phosphorylation of HNRNPU at Ser-59 in mitosis. Interacts with POU3F4. Interacts with SMARCA4; this interaction occurs in embryonic stem cells and stimulates global Pol II-mediated transcription. Interacts (via C-terminus) with TOP2A; this interaction protects the topoisomerase TOP2A from degradation and positively regulates the relaxation of supercoiled DNA by TOP2A in a RNA-dependent manner. Interacts with TPX2; this interaction recruits HNRNPU to spindle microtubules (MTs). Interacts with UBQLN2. Interacts (via RNA-binding RGG-box region) with ZBTB7B; the interaction facilitates the recruitment of long non-coding RNA Blnc1 by ZBTB7B. Interacts with ERCC6. (Microbial infection) Interacts with HIV-1 protein Rev. Post-translationally, cleaved at Asp-100 by CASP3 during T-cell apoptosis, resulting in a loss of DNA- and chromatin-binding activities. In terms of processing, extensively phosphorylated. Phosphorylated on Ser-59 by PLK1 and dephosphorylated by protein phosphatase 2A (PP2A) in mitosis. Arg-739 is dimethylated, probably to asymmetric dimethylarginine. Arg-733 is dimethylated, probably to asymmetric dimethylarginine. Post-translationally, citrullinated by PADI4. In terms of tissue distribution, widely expressed.

It is found in the nucleus. The protein resides in the nucleus matrix. It localises to the chromosome. Its subcellular location is the nucleus speckle. The protein localises to the cytoplasm. It is found in the cytoskeleton. The protein resides in the microtubule organizing center. It localises to the centrosome. Its subcellular location is the centromere. The protein localises to the kinetochore. It is found in the spindle. The protein resides in the spindle pole. It localises to the midbody. Its subcellular location is the cell surface. The protein localises to the cytoplasmic granule. Functionally, DNA- and RNA-binding protein involved in several cellular processes such as nuclear chromatin organization, telomere-length regulation, transcription, mRNA alternative splicing and stability, Xist-mediated transcriptional silencing and mitotic cell progression. Plays a role in the regulation of interphase large-scale gene-rich chromatin organization through chromatin-associated RNAs (caRNAs) in a transcription-dependent manner, and thereby maintains genomic stability. Required for the localization of the long non-coding Xist RNA on the inactive chromosome X (Xi) and the subsequent initiation and maintenance of X-linked transcriptional gene silencing during X-inactivation. Plays a role as a RNA polymerase II (Pol II) holoenzyme transcription regulator. Promotes transcription initiation by direct association with the core-TFIIH basal transcription factor complex for the assembly of a functional pre-initiation complex with Pol II in a actin-dependent manner. Blocks Pol II transcription elongation activity by inhibiting the C-terminal domain (CTD) phosphorylation of Pol II and dissociates from Pol II pre-initiation complex prior to productive transcription elongation. Positively regulates CBX5-induced transcriptional gene silencing and retention of CBX5 in the nucleus. Negatively regulates glucocorticoid-mediated transcriptional activation. Key regulator of transcription initiation and elongation in embryonic stem cells upon leukemia inhibitory factor (LIF) signaling. Involved in the long non-coding RNA H19-mediated Pol II transcriptional repression. Participates in the circadian regulation of the core clock component BMAL1 transcription. Plays a role in the regulation of telomere length. Plays a role as a global pre-mRNA alternative splicing modulator by regulating U2 small nuclear ribonucleoprotein (snRNP) biogenesis. Plays a role in mRNA stability. Component of the CRD-mediated complex that promotes MYC mRNA stabilization. Enhances the expression of specific genes, such as tumor necrosis factor TNFA, by regulating mRNA stability, possibly through binding to the 3'-untranslated region (UTR). Plays a role in mitotic cell cycle regulation. Involved in the formation of stable mitotic spindle microtubules (MTs) attachment to kinetochore, spindle organization and chromosome congression. Phosphorylation at Ser-59 by PLK1 is required for chromosome alignement and segregation and progression through mitosis. Also contributes to the targeting of AURKA to mitotic spindle MTs. Binds to double- and single-stranded DNA and RNA, poly(A), poly(C) and poly(G) oligoribonucleotides. Binds to chromatin-associated RNAs (caRNAs). Associates with chromatin to scaffold/matrix attachment region (S/MAR) elements in a chromatin-associated RNAs (caRNAs)-dependent manner. Binds to the Xist RNA. Binds the long non-coding H19 RNA. Binds to SMN1/2 pre-mRNAs at G/U-rich regions. Binds to small nuclear RNAs (snRNAs). Binds to the 3'-UTR of TNFA mRNA. Binds (via RNA-binding RGG-box region) to the long non-coding Xist RNA; this binding is direct and bridges the Xist RNA and the inactive chromosome X (Xi). Also negatively regulates embryonic stem cell differentiation upon LIF signaling. Required for embryonic development. Binds to brown fat long non-coding RNA 1 (Blnc1); facilitates the recruitment of Blnc1 by ZBTB7B required to drive brown and beige fat development and thermogenesis. (Microbial infection) Negatively regulates immunodeficiency virus type 1 (HIV-1) replication by preventing the accumulation of viral mRNA transcripts in the cytoplasm. The polypeptide is Heterogeneous nuclear ribonucleoprotein U (Homo sapiens (Human)).